The primary structure comprises 126 residues: Probable prefoldin subunit 6 (126 aa).

The protein belongs to the prefoldin subunit beta family. In terms of assembly, heterohexamer of two PFD-alpha type and four PFD-beta type subunits. In terms of tissue distribution, expressed in embryonic blastomeres and gonads.

The protein localises to the cytoplasm. In terms of biological role, binds specifically to cytosolic chaperonin (c-CPN) and transfers target proteins to it. Binds to nascent polypeptide chain and promotes folding in an environment in which there are many competing pathways for nonnative proteins. Required for positioning of the mitotic spindle. This Caenorhabditis elegans protein is Probable prefoldin subunit 6 (pfd-6).